Reading from the N-terminus, the 179-residue chain is Adenine phosphoribosyltransferase (179 aa).

It belongs to the purine/pyrimidine phosphoribosyltransferase family. As to quaternary structure, homodimer.

The protein localises to the cytoplasm. The enzyme catalyses AMP + diphosphate = 5-phospho-alpha-D-ribose 1-diphosphate + adenine. It functions in the pathway purine metabolism; AMP biosynthesis via salvage pathway; AMP from adenine: step 1/1. Its function is as follows. Catalyzes a salvage reaction resulting in the formation of AMP, that is energically less costly than de novo synthesis. This chain is Adenine phosphoribosyltransferase, found in Methylacidiphilum infernorum (isolate V4) (Methylokorus infernorum (strain V4)).